A 212-amino-acid chain; its full sequence is Hydroxyacylglutathione hydrolase GloC (212 aa).

The Zn(2+) site is built by H55, H57, D59, H60, H132, D151, and H192.

This sequence belongs to the metallo-beta-lactamase superfamily. Glyoxalase II family. Requires Zn(2+) as cofactor.

The catalysed reaction is an S-(2-hydroxyacyl)glutathione + H2O = a 2-hydroxy carboxylate + glutathione + H(+). It catalyses the reaction (R)-S-lactoylglutathione + H2O = (R)-lactate + glutathione + H(+). It participates in secondary metabolite metabolism; methylglyoxal degradation; (R)-lactate from methylglyoxal: step 2/2. Its function is as follows. Type II glyoxalase, isozyme of GloB, that hydrolyzes (R)-S-lactoylglutathione to (R)-lactate and glutathione. Plays a role in methylglyoxal (MG) detoxification. This is Hydroxyacylglutathione hydrolase GloC from Haemophilus influenzae (strain ATCC 51907 / DSM 11121 / KW20 / Rd).